A 353-amino-acid polypeptide reads, in one-letter code: Putative glutamine synthetase (353 aa).

A GS beta-grasp domain is found at 19 to 102 (SIIEYVWIGG…VICDTYDVNG (84 aa)). Positions 109–353 (HRHNANIIFE…IILQTVCESD (245 aa)) constitute a GS catalytic domain.

This sequence belongs to the glutamine synthetase family.

The enzyme catalyses L-glutamate + NH4(+) + ATP = L-glutamine + ADP + phosphate + H(+). This is Putative glutamine synthetase from Acanthamoeba polyphaga (Amoeba).